A 388-amino-acid chain; its full sequence is Riboflavin biosynthesis protein RibBA (388 aa).

The interval 1–186 is DHBP synthase; sequence MEELREAFEE…MDDVWREFVK (186 aa). Residues 21 to 22, D26, 125 to 129, and E149 contribute to the D-ribulose 5-phosphate site; these read RE and RKGHT. Position 22 (E22) interacts with Mg(2+). A Mg(2+)-binding site is contributed by H128. Residues 187–388 are GTP cyclohydrolase II; the sequence is RKLLMKKKAE…LEEIFREVNS (202 aa). Residue 235 to 239 participates in GTP binding; sequence RIHSE. 3 residues coordinate Zn(2+): C240, C251, and C253. GTP-binding positions include Q256, 277-279, and T299; that span reads EGR. D311 acts as the Proton acceptor; for GTP cyclohydrolase activity in catalysis. The Nucleophile; for GTP cyclohydrolase activity role is filled by R313. GTP contacts are provided by T334 and K339.

It in the N-terminal section; belongs to the DHBP synthase family. In the C-terminal section; belongs to the GTP cyclohydrolase II family. Requires Mg(2+) as cofactor. Mn(2+) is required as a cofactor. It depends on Zn(2+) as a cofactor.

It carries out the reaction D-ribulose 5-phosphate = (2S)-2-hydroxy-3-oxobutyl phosphate + formate + H(+). The catalysed reaction is GTP + 4 H2O = 2,5-diamino-6-hydroxy-4-(5-phosphoribosylamino)-pyrimidine + formate + 2 phosphate + 3 H(+). The protein operates within cofactor biosynthesis; riboflavin biosynthesis; 2-hydroxy-3-oxobutyl phosphate from D-ribulose 5-phosphate: step 1/1. It participates in cofactor biosynthesis; riboflavin biosynthesis; 5-amino-6-(D-ribitylamino)uracil from GTP: step 1/4. In terms of biological role, catalyzes the conversion of D-ribulose 5-phosphate to formate and 3,4-dihydroxy-2-butanone 4-phosphate. Functionally, catalyzes the conversion of GTP to 2,5-diamino-6-ribosylamino-4(3H)-pyrimidinone 5'-phosphate (DARP), formate and pyrophosphate. The protein is Riboflavin biosynthesis protein RibBA of Thermotoga maritima (strain ATCC 43589 / DSM 3109 / JCM 10099 / NBRC 100826 / MSB8).